Consider the following 769-residue polypeptide: MSKCRKTPVQQLASPTSFSPDILADIFELFAKNFSYSKPLNNEWQLPDPSEIFTCDHTEFNAFLDLKNSLNEVKNLLSDKKLDEWHEHTAFTNKAGKIISHVRKSVNAELCTQAWCKFHEILCSFPLIPQEAFQNGKLNSLHLCEAPGAFIASLNHYLKSHRFPCHWSWVANTLNPYHEANDDLMMIMDDRLIANTLHWWYFGPDNTGDIMTLKFLTGLQNFISSMATVHLVTADGSFDCQGNPGEQEALVSSLHYCEVVTALTTLGNGGSFVLKMFTMFEHCSINLMYLLNCCLDQVHVFKPATSKAGNSEVYVVCLYYKGREAIHPLLSKMTLNFGTEMKRKALFPHHVIPDSFLKRHEECCVFFHKYQLETISENIRLFECMGKAEQEKLNNLRDCAVQYFMQKFQLKHLSRNNWLVKKSSIGCSTNTKWFGQRNKYFRTYNERKMLEALSWKDKVAKGYFNSWAEEHGVYHPGQSSILEGTASNLECHLWHILEGKKLPKVKCSPFCNGEILKTLNEAIEKSLGGAFNLDSKFRPKQQYSCSCHVFSEELIFSELCSLTECLQDEQVVEPSNRIKCLLVGFSTLHNIKMHIPLEVRLLESAELTTFSCSLLHDGDPTYQRLFLDCLLHSLRELHTGDVMILPVLSCFTRFMAGLIFVLHSCFRFITFFCPTSSDPLRTCAVLLCVGYQDLPNPVFQYLQSVNELLSTLLNSDSPQQVLQFVPMEVLLKGALLDFLWDLNAAIAKRHLHFIIQREREEINSLQLQN.

The 214-residue stretch at 109-322 folds into the Adrift-type SAM-dependent 2'-O-MTase domain; sequence ELCTQAWCKF…VYVVCLYYKG (214 aa). Lys-117 is a catalytic residue. 3 residues coordinate S-adenosyl-L-methionine: Gly-148, Trp-167, and Asp-235. Residue Asp-235 is part of the active site. The active-site Proton acceptor is the Lys-275.

It localises to the nucleus. The protein localises to the cytoplasm. The enzyme catalyses a 5'-end (N(7)-methyl 5'-triphosphoguanosine)-(2'-O-methyl-ribonucleoside)-(ribonucleotide) in mRNA + S-adenosyl-L-methionine = a 5'-end (N(7)-methyl 5'-triphosphoguanosine)-(2'-O-methyl-ribonucleoside)-(2'-O-methyl-ribonucleotide) in mRNA + S-adenosyl-L-homocysteine + H(+). Functionally, S-adenosyl-L-methionine-dependent methyltransferase that mediates mRNA cap2 2'-O-ribose methylation to the 5'-cap structure of mRNAs. Methylates the ribose of the second nucleotide of a m(7)GpppG-capped mRNA and small nuclear RNA (snRNA) (cap0) to produce m(7)GpppRmpNm (cap2). Recognizes a guanosine cap on RNA independently of its N(7) methylation status. Display cap2 methylation on both cap0 and cap1. Displays a preference for cap1 RNAs. The polypeptide is Cap-specific mRNA (nucleoside-2'-O-)-methyltransferase 2 (CMTR2) (Pongo abelii (Sumatran orangutan)).